The primary structure comprises 175 residues: MSFPKEGSTIQIHSYKHNGKLHRIWEDTIVLKGTSKVVVAGNDRIIVREADGRNWRTREPAICYFDAEQWFNMICMLRADGIYYYCNLGTPFTWDEEALKYIDYDLDIKVYPDMTMKLLDEDEYELHSKLMKYPPELDVILRKSVDELISWIHQRKGPFAPQFVENWYERYLQYR.

Arginine 23 (proton donor) is an active-site residue. Mg(2+)-binding residues include asparagine 87, aspartate 103, aspartate 105, aspartate 107, aspartate 120, and glutamate 123.

This sequence belongs to the Ntdp family. It depends on Mg(2+) as a cofactor.

It carries out the reaction a ribonucleoside 5'-triphosphate + H2O = a ribonucleoside 5'-diphosphate + phosphate + H(+). The enzyme catalyses a ribonucleoside 5'-diphosphate + H2O = a ribonucleoside 5'-phosphate + phosphate + H(+). Its function is as follows. Has nucleoside phosphatase activity towards nucleoside triphosphates and nucleoside diphosphates. The chain is Nucleoside triphosphate/diphosphate phosphatase from Shouchella clausii (strain KSM-K16) (Alkalihalobacillus clausii).